The chain runs to 673 residues: Probable urea active transporter 2 (673 aa).

Transmembrane regions (helical) follow at residues 8 to 28 (GYGY…MAII), 83 to 103 (IMGG…FLFL), 132 to 152 (VYLF…LLGG), 164 to 184 (TVAA…LGGL), 196 to 218 (VMIY…LIGS), 249 to 269 (MMYL…GDPG), 287 to 307 (LMGG…AGLA), 336 to 356 (IYGM…VMLF), 391 to 411 (QLVR…GALS), 424 to 446 (LLTF…LFWN), 451 to 471 (FSLV…WLAS), 492 to 512 (FVGN…LSYI), 559 to 579 (IGIN…ALLG), and 592 to 612 (LIIV…LFPL).

It belongs to the sodium:solute symporter (SSF) (TC 2.A.21) family.

It localises to the endoplasmic reticulum membrane. Functionally, involved in active transport of urea. This chain is Probable urea active transporter 2 (dur3-2), found in Schizosaccharomyces pombe (strain 972 / ATCC 24843) (Fission yeast).